The following is a 574-amino-acid chain: Ribonuclease Y (574 aa).

The helical transmembrane segment at 1–21 (MSLLDLVLLLLVLGLGGVLLL) threads the bilayer. In terms of domain architecture, KH spans 264 to 327 (AVTVVPIPSD…EIARMALEEL (64 aa)). Residues 390–483 (VLKHSIQVAH…VAAADALSAA (94 aa)) form the HD domain.

It belongs to the RNase Y family.

Its subcellular location is the cell membrane. Endoribonuclease that initiates mRNA decay. The protein is Ribonuclease Y of Thermus thermophilus (strain ATCC 27634 / DSM 579 / HB8).